Here is a 389-residue protein sequence, read N- to C-terminus: Major outer membrane porin (389 aa).

Positions 1-22 (MKKLLKSALLFAATGSALSLQA) are cleaved as a signal peptide.

This sequence belongs to the chlamydial porin (CP) (TC 1.B.2) family. In terms of assembly, part of a disulfide cross-linked outer membrane complex (COMC) composed of the major outer membrane porin (MOMP), the small cysteine-rich protein (OmcA) and the large cysteine-rich periplasmic protein (OmcB).

The protein localises to the cell outer membrane. Functionally, in elementary bodies (EBs, the infectious stage, which is able to survive outside the host cell) provides the structural integrity of the outer envelope through disulfide cross-links with the small cysteine-rich protein and the large cysteine-rich periplasmic protein. It has been described in publications as the Sarkosyl-insoluble COMC (Chlamydia outer membrane complex), and serves as the functional equivalent of peptidoglycan. Permits diffusion of specific solutes through the outer membrane. The polypeptide is Major outer membrane porin (ompA) (Chlamydia abortus (strain DSM 27085 / S26/3) (Chlamydophila abortus)).